Reading from the N-terminus, the 1091-residue chain is Constitutive coactivator of PPAR-gamma-like protein 2 (1091 aa).

A compositionally biased stretch (low complexity) spans 35 to 53 (QQQHLHRQLPPAALAPGAP). 4 disordered regions span residues 35–105 (QQQH…HPPP), 503–575 (NCLT…SEPH), 966–1010 (SRSS…QGSS), and 1037–1077 (VEEK…KNHV). Arginine 57 carries the omega-N-methylarginine modification. Residues 82 to 95 (SRHHHPAHHFHHHG) show a composition bias toward basic residues. Positions 532–544 (GSEQITEAVQQQP) are enriched in polar residues. Residues 966–976 (SRSSRSRGSFG) show a composition bias toward low complexity. Arginine 972 is subject to Omega-N-methylarginine. Over residues 1062–1077 (SDDHCLPVKNGEKNHV) the composition is skewed to basic and acidic residues.

Belongs to the constitutive coactivator of PPAR-gamma family.

In Mus musculus (Mouse), this protein is Constitutive coactivator of PPAR-gamma-like protein 2 (Fam120c).